The sequence spans 144 residues: MPRHHQKKSSASGGGSQRQLRVGEQVRHAMAEILAQGNVHDADLEGHIVTVPEVRMSPDLKLATIYVMPLGGRDTEIVIAALERNKKFLRGEVARRVNLKFAPDVRFRVDERFDEAERIEKLLRTPAVQKDLEQDPDSDREEEQ.

Disordered regions lie at residues methionine 1–valine 22 and threonine 125–glutamine 144. The span at glutamine 134–glutamine 144 shows a compositional bias: acidic residues.

Belongs to the RbfA family. In terms of assembly, monomer. Binds 30S ribosomal subunits, but not 50S ribosomal subunits or 70S ribosomes.

It localises to the cytoplasm. In terms of biological role, one of several proteins that assist in the late maturation steps of the functional core of the 30S ribosomal subunit. Associates with free 30S ribosomal subunits (but not with 30S subunits that are part of 70S ribosomes or polysomes). Required for efficient processing of 16S rRNA. May interact with the 5'-terminal helix region of 16S rRNA. The polypeptide is Ribosome-binding factor A (Bradyrhizobium diazoefficiens (strain JCM 10833 / BCRC 13528 / IAM 13628 / NBRC 14792 / USDA 110)).